The sequence spans 583 residues: MRASQYFISTLKEAPSDAEVVSQKLMLRAGFIRKVAAGIYSYLPIGLRVIRKVEDIVRDEMNRAGALELTMPLVQPAELWDETGRWEQMGAEMLRFKDRHQRDFALQPTSEEVVTDIARQELKSYRQLPKNFYQIQTKFRDERRPRFGVMRGREFTMKDAYSFDRDVAAAGRSYDAMYAAYCRIFDRLGLTYRAVAADTGAIGGDRSHEFQVIADTGEDAIVYCPGSDYAANIELAEALPLLATRAAPAQALEKTPTPGRTTCEEVAKLLGVPLETTVKSLVLATDDVDDTNKPAGVTVWLLLVRGDHELNEVKAGKIPGLKAGFRFATETEIAERFGCQPGYLGPVGVNKAVKIVADRTVANMADFICGANEADFHLTGTNWGRDLPEPDLVADLRNIIEGDPSPDGRGRLAIQRGIEVGHVFYLGTKYSQSMNATFLDENGKPKHFEMGCYGIGVTRILGAAIEQNHDARGIIWPDAIAPFRVVVCPVGWGKSDAVRTEATKLYETLCAGGIDVILDDRDERPGVMFADWELIGVPHRVVIGDRGLKDGMAEYQGRRDAEAAKIPLAELAAFVGSKLRPTA.

Belongs to the class-II aminoacyl-tRNA synthetase family. ProS type 1 subfamily. Homodimer.

The protein resides in the cytoplasm. It carries out the reaction tRNA(Pro) + L-proline + ATP = L-prolyl-tRNA(Pro) + AMP + diphosphate. In terms of biological role, catalyzes the attachment of proline to tRNA(Pro) in a two-step reaction: proline is first activated by ATP to form Pro-AMP and then transferred to the acceptor end of tRNA(Pro). As ProRS can inadvertently accommodate and process non-cognate amino acids such as alanine and cysteine, to avoid such errors it has two additional distinct editing activities against alanine. One activity is designated as 'pretransfer' editing and involves the tRNA(Pro)-independent hydrolysis of activated Ala-AMP. The other activity is designated 'posttransfer' editing and involves deacylation of mischarged Ala-tRNA(Pro). The misacylated Cys-tRNA(Pro) is not edited by ProRS. The sequence is that of Proline--tRNA ligase from Aromatoleum aromaticum (strain DSM 19018 / LMG 30748 / EbN1) (Azoarcus sp. (strain EbN1)).